The following is a 331-amino-acid chain: Ferredoxin--NADP reductase 2 (331 aa).

FAD contacts are provided by E37, Q45, Y50, V90, F124, D286, and T327.

The protein belongs to the ferredoxin--NADP reductase type 2 family. In terms of assembly, homodimer. It depends on FAD as a cofactor.

It carries out the reaction 2 reduced [2Fe-2S]-[ferredoxin] + NADP(+) + H(+) = 2 oxidized [2Fe-2S]-[ferredoxin] + NADPH. This Listeria innocua serovar 6a (strain ATCC BAA-680 / CLIP 11262) protein is Ferredoxin--NADP reductase 2.